A 334-amino-acid polypeptide reads, in one-letter code: MSENVVSTGAVNAVKEVWEKRIKKLNEDLKREKEFQQKLVRIWEERVCLTKLREKVTKEDGRVILKIEKEEWKTLPSSLLKLNQLQEWQLHRIGLLKIPEFIGRFQNLIVLDLSRNTITEIPRGIGLLTRLQELILSYNRIKTVPMELSYCASLEKLELAVNRDISDLPQELSNLLKLTHLDLSMNLFTTIPPAVLNMPALEWLDMGSNRLEQLPDTIERMQNLHTLWLQRNEITCLPETISSMKNLSTLVLSNNKLQDIPVCMEKMTNLRFVNFRDNPLKLEVTLPPSENIEEEEERELFGLQFMHTYIQESRRAGNQVNCSTTSPNSIDADG.

A coiled-coil region spans residues 10 to 47 (AVNAVKEVWEKRIKKLNEDLKREKEFQQKLVRIWEERV). LRR repeat units lie at residues 84-105 (QLQEWQLHRIGLLKIPEFIGRF), 107-128 (NLIVLDLSRNTITEIPRGIGLL), 130-151 (RLQELILSYNRIKTVPMELSYC), 153-176 (SLEKLELAVNRDISDLPQELSNLL), 177-198 (KLTHLDLSMNLFTTIPPAVLNM), 200-221 (ALEWLDMGSNRLEQLPDTIERM), 223-244 (NLHTLWLQRNEITCLPETISSM), 246-267 (NLSTLVLSNNKLQDIPVCMEKM), and 269-290 (NLRFVNFRDNPLKLEVTLPPSE).

Interacts with MYH7 (via C-terminus).

Its subcellular location is the cytoplasm. The protein resides in the myofibril. It is found in the sarcomere. It localises to the m line. Component of the sarcomeric M-band which plays a role in myocyte response to biomechanical stress. May regulate expression of other M-band proteins via an SRF-dependent pathway. Important for normal contractile function in heart. The sequence is that of Leucine-rich repeat-containing protein 39 from Bos taurus (Bovine).